Consider the following 173-residue polypeptide: Peptide deformylase (173 aa).

Residues Cys-91 and His-133 each coordinate Fe cation. Glu-134 is a catalytic residue. His-137 serves as a coordination point for Fe cation.

This sequence belongs to the polypeptide deformylase family. It depends on Fe(2+) as a cofactor.

It catalyses the reaction N-terminal N-formyl-L-methionyl-[peptide] + H2O = N-terminal L-methionyl-[peptide] + formate. Its function is as follows. Removes the formyl group from the N-terminal Met of newly synthesized proteins. Requires at least a dipeptide for an efficient rate of reaction. N-terminal L-methionine is a prerequisite for activity but the enzyme has broad specificity at other positions. The sequence is that of Peptide deformylase from Blochmanniella pennsylvanica (strain BPEN).